The primary structure comprises 230 residues: Large ribosomal subunit protein uL1 (230 aa).

The protein belongs to the universal ribosomal protein uL1 family. Part of the 50S ribosomal subunit.

Functionally, binds directly to 23S rRNA. The L1 stalk is quite mobile in the ribosome, and is involved in E site tRNA release. Protein L1 is also a translational repressor protein, it controls the translation of the L11 operon by binding to its mRNA. This is Large ribosomal subunit protein uL1 from Acidiphilium cryptum (strain JF-5).